A 559-amino-acid polypeptide reads, in one-letter code: ATP-dependent RNA helicase HAS1 (559 aa).

Residues Met1–Gly90 form a disordered region. Basic and acidic residues-rich tracts occupy residues Ser9–Ala22 and Pro55–Lys75. Positions Tyr93–Ala121 match the Q motif motif. The region spanning Ile124–Tyr300 is the Helicase ATP-binding domain. Ala137–Thr144 lines the ATP pocket. The short motif at Asp247–Asp250 is the DEAD box element. The 171-residue stretch at Gly314–Ile484 folds into the Helicase C-terminal domain.

This sequence belongs to the DEAD box helicase family. DDX18/HAS1 subfamily. Associates in the nucleolus with the 60S and pre-60S ribosomal subunits.

It localises to the nucleus. The protein localises to the nucleolus. It catalyses the reaction ATP + H2O = ADP + phosphate + H(+). In terms of biological role, ATP-dependent RNA helicase involved in 40S ribosomal subunit biogenesis. Required for the processing and cleavage of 35S pre-rRNA at sites A0, A1, and A2, leading to mature 18S rRNA. The chain is ATP-dependent RNA helicase HAS1 (HAS1) from Lodderomyces elongisporus (strain ATCC 11503 / CBS 2605 / JCM 1781 / NBRC 1676 / NRRL YB-4239) (Yeast).